The following is a 32-amino-acid chain: ilv operon leader peptide (32 aa).

The chain is ilv operon leader peptide (ilvL) from Edwardsiella tarda.